Reading from the N-terminus, the 241-residue chain is DnaA regulatory inactivator Hda (241 aa).

It belongs to the DnaA family. HdA subfamily. The active form seems to be an ADP-bound monomer. Forms the RIDA complex (regulatory inactivation of DnaA) of ATP-DnaA, ADP-Hda and the DNA-loaded beta sliding clamp (dnaN).

Functionally, mediates the interaction of DNA replication initiator protein DnaA with DNA polymerase subunit beta sliding clamp (dnaN). Stimulates hydrolysis of ATP-DnaA to ADP-DnaA, rendering DnaA inactive for reinitiation, a process called regulatory inhibition of DnaA or RIDA. This is DnaA regulatory inactivator Hda from Salmonella agona (strain SL483).